Reading from the N-terminus, the 454-residue chain is Guanine deaminase (454 aa).

Residues histidine 82 and histidine 84 each coordinate Zn(2+). Residues 84–87 (HASQ), 213–214 (RF), 240–243 (HISE), and aspartate 330 each bind substrate. Zn(2+) is bound by residues histidine 240 and aspartate 330. Phosphoserine is present on serine 453.

Belongs to the metallo-dependent hydrolases superfamily. ATZ/TRZ family. Homodimer. Zn(2+) serves as cofactor.

It catalyses the reaction guanine + H2O + H(+) = xanthine + NH4(+). It participates in purine metabolism; guanine degradation; xanthine from guanine: step 1/1. Its function is as follows. Catalyzes the hydrolytic deamination of guanine, producing xanthine and ammonia. The polypeptide is Guanine deaminase (GDA) (Pongo abelii (Sumatran orangutan)).